A 535-amino-acid polypeptide reads, in one-letter code: Alpha-1,3-mannosyl-glycoprotein 4-beta-N-acetylglucosaminyltransferase A (535 aa).

The Cytoplasmic portion of the chain corresponds to 1–4 (MRLR). Residues 5–27 (NGTVATALAFITSFLTLSWYTTW) traverse the membrane as a helical; Signal-anchor for type II membrane protein segment. Positions 28–63 (QNGKEKLIAYQREFLALKERLRIAEHRISQRSSELN) form a coiled coil. Residues 28–535 (QNGKEKLIAY…NEIHIKKATN (508 aa)) are Lumenal-facing. N-linked (GlcNAc...) asparagine glycans are attached at residues Asn-77 and Asn-458. A Phosphoserine modification is found at Ser-474.

Belongs to the glycosyltransferase 54 family. It depends on a divalent metal cation as a cofactor. In terms of processing, N-glycosylated.

The protein localises to the golgi apparatus membrane. It localises to the secreted. The enzyme catalyses N(4)-{beta-D-GlcNAc-(1-&gt;2)-alpha-D-Man-(1-&gt;3)-[beta-D-GlcNAc-(1-&gt;2)-alpha-D-Man-(1-&gt;6)]-beta-D-Man-(1-&gt;4)-beta-D-GlcNAc-(1-&gt;4)-beta-D-GlcNAc}-L-asparaginyl-[protein] + UDP-N-acetyl-alpha-D-glucosamine = N(4)-{beta-D-GlcNAc-(1-&gt;2)-[beta-D-GlcNAc-(1-&gt;4)]-alpha-D-Man-(1-&gt;3)-[beta-D-GlcNAc-(1-&gt;2)-alpha-D-Man-(1-&gt;6)]-beta-D-Man-(1-&gt;4)-beta-D-GlcNAc-(1-&gt;4)-beta-D-GlcNAc}-L-asparaginyl-[protein] + UDP + H(+). It carries out the reaction an N(4)-{beta-D-GlcNAc-(1-&gt;2)-alpha-D-Man-(1-&gt;3)-[alpha-D-Man-(1-&gt;6)]-beta-D-Man-(1-&gt;4)-beta-D-GlcNAc-(1-&gt;4)-beta-D-GlcNAc}-L-asparaginyl-[protein] + UDP-N-acetyl-alpha-D-glucosamine = an N(4)-{beta-D-GlcNAc-(1-&gt;2)-[beta-D-GlcNAc-(1-&gt;4)]-alpha-D-Man-(1-&gt;3)-[alpha-D-Man-(1-&gt;6)]-beta-D-Man-(1-&gt;4)-beta-D-GlcNAc-(1-&gt;4)-beta-D-GlcNAc}-L-asparaginyl-[protein] + UDP + H(+). It catalyses the reaction an N(4)-{beta-D-GlcNAc-(1-&gt;2)-alpha-D-Man-(1-&gt;3)-[beta-D-GlcNAc-(1-&gt;2)-[beta-D-GlcNAc-(1-&gt;6)]-alpha-D-Man-(1-&gt;6)]-beta-D-Man-(1-&gt;4)-beta-D-GlcNAc-(1-&gt;4)-beta-D-GlcNAc}-L-asparaginyl-[protein] + UDP-N-acetyl-alpha-D-glucosamine = an N(4)-{beta-D-GlcNAc-(1-&gt;2)-[beta-D-GlcNAc-(1-&gt;4)]-alpha-D-Man-(1-&gt;3)-[beta-D-GlcNAc-(1-&gt;2)-[beta-D-GlcNAc-(1-&gt;6)]-alpha-D-Man-(1-&gt;6)]-beta-D-Man-(1-&gt;4)-beta-D-GlcNAc-(1-&gt;4)-beta-D-GlcNAc}-L-asparaginyl-[protein] + UDP + H(+). The catalysed reaction is an N(4)-{beta-D-GlcNAc-(1-&gt;2)-alpha-D-Man-(1-&gt;3)-[beta-D-GlcNAc-(1-&gt;2)-alpha-D-Man-(1-&gt;6)]-beta-D-Man-(1-&gt;4)-beta-D-GlcNAc-(1-&gt;4)-[alpha-L-Fuc-(1-&gt;6)]-beta-D-GlcNAc}-L-asparaginyl-[protein] + UDP-N-acetyl-alpha-D-glucosamine = N(4)-{beta-D-GlcNAc-(1-&gt;2)-[beta-D-GlcNAc-(1-&gt;4)]-alpha-D-Man-(1-&gt;3)-[beta-D-GlcNAc-(1-&gt;2)-alpha-D-Man-(1-&gt;6)]-beta-D-Man-(1-&gt;4)-beta-D-GlcNAc-(1-&gt;4)-[alpha-L-Fuc-(1-&gt;6)]-beta-D-GlcNAc}-asparaginyl-[protein] + UDP + H(+). The enzyme catalyses an N(4)-{beta-D-GlcNAc-(1-&gt;2)-alpha-D-Man-(1-&gt;3)-[beta-D-Gal-(1-&gt;4)-beta-D-GlcNAc-(1-&gt;2)-alpha-D-Man-(1-&gt;6)]-beta-D-Man-(1-&gt;4)-beta-D-GlcNAc-(1-&gt;4)-beta-D-GlcNAc}-L-asparaginyl-[protein] + UDP-N-acetyl-alpha-D-glucosamine = an N(4)-{beta-D-GlcNAc-(1-&gt;2)-[beta-D-GlcNAc-(1-&gt;4)]-alpha-D-Man-(1-&gt;3)-[beta-D-Gal-(1-&gt;4)-beta-D-GlcNAc-(1-&gt;2)-alpha-D-Man-(1-&gt;6)]-beta-D-Man-(1-&gt;4)-beta-D-GlcNAc-(1-&gt;4)-beta-D-GlcNAc}-L-asparaginyl-[protein] + UDP + H(+). It carries out the reaction N(4)-{beta-D-GlcNAc-(1-&gt;2)-alpha-D-Man-(1-&gt;3)-[alpha-D-Man-(1-&gt;3)-{alpha-D-Man-(1-&gt;6)}-alpha-D-Man-(1-&gt;6)]-beta-D-Man-(1-&gt;4)-beta-D-GlcNAc-(1-&gt;4)-beta-D-GlcNAc}-asparaginyl-[protein] + UDP-N-acetyl-alpha-D-glucosamine = N(4)-{beta-D-GlcNAc-(1-&gt;2)-[beta-D-GlcNAc-(1-&gt;4)]-alpha-D-Man-(1-&gt;3)-[alpha-D-Man-(1-&gt;3)-{alpha-D-Man-(1-&gt;6)}-alpha-D-Man-(1-&gt;6)]-beta-D-Man-(1-&gt;4)-beta-D-GlcNAc-(1-&gt;4)-beta-D-GlcNAc}-asparaginyl-[protein] + UDP + H(+). It catalyses the reaction N(4)-{beta-D-GlcNAc-(1-&gt;2)-alpha-D-Man-(1-&gt;3)-beta-D-Man-(1-&gt;4)-beta-D-GlcNAc-(1-&gt;4)-beta-D-GlcNAc}-asparaginyl-[protein] + UDP-N-acetyl-alpha-D-glucosamine = N(4)-{beta-D-GlcNAc-(1-&gt;2)-[beta-D-GlcNAc-(1-&gt;4)]-alpha-D-Man-(1-&gt;3)-beta-D-Man-(1-&gt;4)-beta-D-GlcNAc-(1-&gt;4)-beta-D-GlcNAc}-asparaginyl-[protein] + UDP + H(+). It participates in protein modification; protein glycosylation. With respect to regulation, inhibited by UDP. Its function is as follows. Glycosyltransferase that catalyze the transfer of GlcNAc from UDP-GlcNAc to the GlcNAcbeta1-2Manalpha1-3 arm of the core structure of N-linked glycans through a beta1-4 linkage and participates in the production of tri- and tetra-antennary N-linked sugar chains. Involved in glucose transport by mediating SLC2A2/GLUT2 glycosylation, thereby controlling cell-surface expression of SLC2A2 in pancreatic beta cells. The sequence is that of Alpha-1,3-mannosyl-glycoprotein 4-beta-N-acetylglucosaminyltransferase A from Pongo abelii (Sumatran orangutan).